Reading from the N-terminus, the 108-residue chain is Phosphoribosyl-ATP pyrophosphatase (108 aa).

This sequence belongs to the PRA-PH family.

It localises to the cytoplasm. It carries out the reaction 1-(5-phospho-beta-D-ribosyl)-ATP + H2O = 1-(5-phospho-beta-D-ribosyl)-5'-AMP + diphosphate + H(+). Its pathway is amino-acid biosynthesis; L-histidine biosynthesis; L-histidine from 5-phospho-alpha-D-ribose 1-diphosphate: step 2/9. In Pelobacter propionicus (strain DSM 2379 / NBRC 103807 / OttBd1), this protein is Phosphoribosyl-ATP pyrophosphatase.